We begin with the raw amino-acid sequence, 326 residues long: tRNA-modifying protein YgfZ (326 aa).

Residues Trp27 and Trp189 each contribute to the folate site.

It belongs to the tRNA-modifying YgfZ family.

It is found in the cytoplasm. Functionally, folate-binding protein involved in regulating the level of ATP-DnaA and in the modification of some tRNAs. It is probably a key factor in regulatory networks that act via tRNA modification, such as initiation of chromosomal replication. The polypeptide is tRNA-modifying protein YgfZ (Escherichia coli O45:K1 (strain S88 / ExPEC)).